An 82-amino-acid chain; its full sequence is RNA-binding protein Hfq (82 aa).

The Sm domain occupies 11-71 (DTFLNHVRKT…ISTIMPGAPI (61 aa)).

The protein belongs to the Hfq family. As to quaternary structure, homohexamer.

Functionally, RNA chaperone that binds small regulatory RNA (sRNAs) and mRNAs to facilitate mRNA translational regulation in response to envelope stress, environmental stress and changes in metabolite concentrations. Also binds with high specificity to tRNAs. This chain is RNA-binding protein Hfq, found in Nitrobacter winogradskyi (strain ATCC 25391 / DSM 10237 / CIP 104748 / NCIMB 11846 / Nb-255).